An 802-amino-acid chain; its full sequence is Lon protease (802 aa).

The Lon N-terminal domain occupies 17-211; it reads SIVMPLFEVV…LFLHILTKHK (195 aa). ATP is bound at residue 363–370; sequence GPPGTGKT. The Lon proteolytic domain occupies 600 to 780; that stretch reads ENVPGVVTGL…EEVLREALDI (181 aa). Residues S686 and K729 contribute to the active site.

The protein belongs to the peptidase S16 family. Homohexamer. Organized in a ring with a central cavity.

It is found in the cytoplasm. It catalyses the reaction Hydrolysis of proteins in presence of ATP.. Its function is as follows. ATP-dependent serine protease that mediates the selective degradation of mutant and abnormal proteins as well as certain short-lived regulatory proteins. Required for cellular homeostasis and for survival from DNA damage and developmental changes induced by stress. Degrades polypeptides processively to yield small peptide fragments that are 5 to 10 amino acids long. Binds to DNA in a double-stranded, site-specific manner. This is Lon protease from Methanosarcina barkeri (strain Fusaro / DSM 804).